A 103-amino-acid chain; its full sequence is Small ribosomal subunit protein uS10 (103 aa).

Belongs to the universal ribosomal protein uS10 family. As to quaternary structure, part of the 30S ribosomal subunit.

In terms of biological role, involved in the binding of tRNA to the ribosomes. The sequence is that of Small ribosomal subunit protein uS10 from Fusobacterium nucleatum subsp. nucleatum (strain ATCC 25586 / DSM 15643 / BCRC 10681 / CIP 101130 / JCM 8532 / KCTC 2640 / LMG 13131 / VPI 4355).